A 343-amino-acid polypeptide reads, in one-letter code: Dihydroorotase (343 aa).

Residues histidine 14 and histidine 16 each coordinate Zn(2+). Substrate-binding positions include histidine 16–arginine 18 and asparagine 42. Residues lysine 100, histidine 137, and histidine 175 each contribute to the Zn(2+) site. Lysine 100 is modified (N6-carboxylysine). Substrate is bound at residue histidine 137. Leucine 220 is a substrate binding site. Position 248 (aspartate 248) interacts with Zn(2+). Aspartate 248 is a catalytic residue. Substrate contacts are provided by histidine 252 and alanine 264.

Belongs to the metallo-dependent hydrolases superfamily. DHOase family. Class II DHOase subfamily. Homodimer. It depends on Zn(2+) as a cofactor.

It catalyses the reaction (S)-dihydroorotate + H2O = N-carbamoyl-L-aspartate + H(+). The protein operates within pyrimidine metabolism; UMP biosynthesis via de novo pathway; (S)-dihydroorotate from bicarbonate: step 3/3. Catalyzes the reversible cyclization of carbamoyl aspartate to dihydroorotate. This is Dihydroorotase from Synechococcus sp. (strain CC9902).